Here is a 311-residue protein sequence, read N- to C-terminus: GTP cyclohydrolase MptA (311 aa).

It belongs to the GTP cyclohydrolase IV family. In terms of assembly, homodimer. Requires Fe(2+) as cofactor.

The enzyme catalyses GTP + H2O = 7,8-dihydroneopterin 2',3'-cyclic phosphate + formate + diphosphate + H(+). It functions in the pathway cofactor biosynthesis; 5,6,7,8-tetrahydromethanopterin biosynthesis. Functionally, converts GTP to 7,8-dihydro-D-neopterin 2',3'-cyclic phosphate, the first intermediate in the biosynthesis of coenzyme methanopterin. This chain is GTP cyclohydrolase MptA, found in Methanocorpusculum labreanum (strain ATCC 43576 / DSM 4855 / Z).